The chain runs to 166 residues: Peptide deformylase (166 aa).

Residues Cys-88 and His-130 each coordinate Fe cation. Glu-131 is a catalytic residue. A Fe cation-binding site is contributed by His-134.

This sequence belongs to the polypeptide deformylase family. Fe(2+) is required as a cofactor.

It carries out the reaction N-terminal N-formyl-L-methionyl-[peptide] + H2O = N-terminal L-methionyl-[peptide] + formate. In terms of biological role, removes the formyl group from the N-terminal Met of newly synthesized proteins. Requires at least a dipeptide for an efficient rate of reaction. N-terminal L-methionine is a prerequisite for activity but the enzyme has broad specificity at other positions. The protein is Peptide deformylase of Thermoanaerobacter sp. (strain X514).